Reading from the N-terminus, the 382-residue chain is Alkane 1-monooxygenase 2 (382 aa).

A run of 4 helical transmembrane segments spans residues 17–37 (GYLA…FVGV), 45–65 (WAWF…YLVG), 88–108 (VSAI…GHIF), and 114–134 (GLLG…IIAI). Fe cation is bound by residues histidine 138, histidine 142, histidine 168, histidine 172, and histidine 173. A helical membrane pass occupies residues 236–256 (ALFAATFGLLWGWQGVVFFLG). Residues histidine 312, histidine 315, and histidine 316 each coordinate Fe cation.

It belongs to the fatty acid desaturase type 1 family. AlkB subfamily. It depends on Fe(3+) as a cofactor.

Its subcellular location is the cell inner membrane. It carries out the reaction octane + 2 reduced [rubredoxin] + O2 + 2 H(+) = 2 oxidized [rubredoxin] + octan-1-ol + H2O. It functions in the pathway hydrocarbon metabolism; alkane degradation. Functionally, catalyzes the hydroxylation of n-alkanes in the presence of a NADH-rubredoxin reductase and rubredoxin. It preferably hydroxylases C8-C16 hydrocarbons. This is Alkane 1-monooxygenase 2 (alkB2) from Alcanivorax borkumensis (strain ATCC 700651 / DSM 11573 / NCIMB 13689 / SK2).